Consider the following 57-residue polypeptide: Sec-independent protein translocase protein TatA (57 aa).

The helical transmembrane segment at 1-21 threads the bilayer; sequence MGISVWQLLIILLIVVMLFGT. Residues 37–57 are disordered; that stretch reads GFRKSVSDGETTTQAEASSRS. Polar residues predominate over residues 44 to 57; that stretch reads DGETTTQAEASSRS.

The protein belongs to the TatA/E family. In terms of assembly, the Tat system comprises two distinct complexes: a TatABC complex, containing multiple copies of TatA, TatB and TatC subunits, and a separate TatA complex, containing only TatA subunits. Substrates initially bind to the TatABC complex, which probably triggers association of the separate TatA complex to form the active translocon.

The protein resides in the cell inner membrane. Part of the twin-arginine translocation (Tat) system that transports large folded proteins containing a characteristic twin-arginine motif in their signal peptide across membranes. TatA could form the protein-conducting channel of the Tat system. In Stutzerimonas stutzeri (Pseudomonas stutzeri), this protein is Sec-independent protein translocase protein TatA.